The chain runs to 267 residues: 4,5-DOPA dioxygenase extradiol (267 aa).

Zn(2+)-binding residues include histidine 9, histidine 47, histidine 168, and histidine 222.

This sequence belongs to the DODA-type extradiol aromatic ring-opening dioxygenase family. Zn(2+) is required as a cofactor. The cofactor is Fe(2+). In terms of tissue distribution, expressed in petals. Not detected in leaves, stems and roots.

The protein resides in the cytoplasm. It carries out the reaction L-dopa + O2 = 4-(L-alanin-3-yl)-2-hydroxy-cis,cis-muconate 6-semialdehyde + H(+). Its pathway is pigment biosynthesis; betalain biosynthesis. In terms of biological role, opens the cyclic ring of dihydroxy-phenylalanine (DOPA) between carbons 4 and 5, thus producing an unstable seco-DOPA that rearranges nonenzymatically to betalamic acid. Produces mainly (S)-betalamic acid. Required for the coloration of flowers. The polypeptide is 4,5-DOPA dioxygenase extradiol (DOD) (Mirabilis jalapa (Garden four-o'clock)).